Reading from the N-terminus, the 328-residue chain is D-cysteine desulfhydrase (328 aa).

At Lys-51 the chain carries N6-(pyridoxal phosphate)lysine.

The protein belongs to the ACC deaminase/D-cysteine desulfhydrase family. In terms of assembly, homodimer. Requires pyridoxal 5'-phosphate as cofactor.

It carries out the reaction D-cysteine + H2O = hydrogen sulfide + pyruvate + NH4(+) + H(+). Catalyzes the alpha,beta-elimination reaction of D-cysteine and of several D-cysteine derivatives. It could be a defense mechanism against D-cysteine. This is D-cysteine desulfhydrase from Shigella boydii serotype 18 (strain CDC 3083-94 / BS512).